Reading from the N-terminus, the 287-residue chain is Protease HtpX (287 aa).

Transmembrane regions (helical) follow at residues 4-24 (IFLL…VMSI) and 33-53 (SGLL…SLAI). His-139 contributes to the Zn(2+) binding site. Glu-140 is a catalytic residue. Zn(2+) is bound at residue His-143. Transmembrane regions (helical) follow at residues 154–174 (LIQG…AGII) and 195–215 (AVVF…VAYF). Glu-220 is a binding site for Zn(2+).

Belongs to the peptidase M48B family. Requires Zn(2+) as cofactor.

It localises to the cell inner membrane. The chain is Protease HtpX from Shewanella piezotolerans (strain WP3 / JCM 13877).